The chain runs to 399 residues: Transmembrane protein 237 homolog (399 aa).

Residues Met-1–Pro-11 show a composition bias toward pro residues. The interval Met-1–Lys-158 is disordered. 3 stretches are compositionally biased toward basic and acidic residues: residues Asn-36–Asn-45, Glu-111–Arg-135, and Lys-144–Lys-158. 4 helical membrane-spanning segments follow: residues Ile-222–Phe-242, Met-256–Ile-276, Gly-301–Leu-321, and Val-343–Pro-363.

This sequence belongs to the TMEM237 family.

Its subcellular location is the membrane. The protein resides in the cell projection. It localises to the cilium. Its function is as follows. Component of the transition zone in primary cilia. Required for ciliogenesis. The chain is Transmembrane protein 237 homolog from Caenorhabditis elegans.